Reading from the N-terminus, the 283-residue chain is Phosphatidylglycerol--prolipoprotein diacylglyceryl transferase (283 aa).

7 helical membrane passes run 21 to 41, 60 to 80, 95 to 115, 124 to 144, 176 to 196, 203 to 223, and 239 to 259; these read LAVRWYGLMYLFGFMFALWLA, LLFAGFLGVVIGGRVGYVLFY, VWTGGMSFHGGLLGVISAMLW, FFTIADFVAPLVPFGLGAGRL, SQLYEFALEGVVLFFILNWFI, GAVSGLFLFGYGTFRFLVEYV, and MGQILSLPMVIGGLLMMLWAF. Arg-143 contributes to the a 1,2-diacyl-sn-glycero-3-phospho-(1'-sn-glycerol) binding site.

Belongs to the Lgt family.

The protein localises to the cell inner membrane. It catalyses the reaction L-cysteinyl-[prolipoprotein] + a 1,2-diacyl-sn-glycero-3-phospho-(1'-sn-glycerol) = an S-1,2-diacyl-sn-glyceryl-L-cysteinyl-[prolipoprotein] + sn-glycerol 1-phosphate + H(+). Its pathway is protein modification; lipoprotein biosynthesis (diacylglyceryl transfer). In terms of biological role, catalyzes the transfer of the diacylglyceryl group from phosphatidylglycerol to the sulfhydryl group of the N-terminal cysteine of a prolipoprotein, the first step in the formation of mature lipoproteins. The sequence is that of Phosphatidylglycerol--prolipoprotein diacylglyceryl transferase from Aliivibrio fischeri (strain MJ11) (Vibrio fischeri).